The chain runs to 296 residues: CRISPR-associated endonuclease Cas1 2 (296 aa).

Mn(2+) is bound by residues Glu157, His224, and Asp237.

This sequence belongs to the CRISPR-associated endonuclease Cas1 family. Homodimer, forms a heterotetramer with a Cas2 homodimer. Requires Mg(2+) as cofactor. Mn(2+) serves as cofactor.

CRISPR (clustered regularly interspaced short palindromic repeat), is an adaptive immune system that provides protection against mobile genetic elements (viruses, transposable elements and conjugative plasmids). CRISPR clusters contain spacers, sequences complementary to antecedent mobile elements, and target invading nucleic acids. CRISPR clusters are transcribed and processed into CRISPR RNA (crRNA). Acts as a dsDNA endonuclease. Involved in the integration of spacer DNA into the CRISPR cassette. In Chlorobaculum tepidum (strain ATCC 49652 / DSM 12025 / NBRC 103806 / TLS) (Chlorobium tepidum), this protein is CRISPR-associated endonuclease Cas1 2.